Here is a 232-residue protein sequence, read N- to C-terminus: Nucleoside diphosphate kinase 2, chloroplastic (232 aa).

The transit peptide at 1–79 (MGCLSVVGAS…TRIFLPHLVA (79 aa)) directs the protein to the chloroplast. 6 residues coordinate ATP: Lys92, Phe140, Arg168, Thr174, Arg185, and Asn195. His198 functions as the Pros-phosphohistidine intermediate in the catalytic mechanism.

This sequence belongs to the NDK family. The cofactor is Mg(2+).

The protein resides in the plastid. It is found in the chloroplast. It carries out the reaction a 2'-deoxyribonucleoside 5'-diphosphate + ATP = a 2'-deoxyribonucleoside 5'-triphosphate + ADP. The enzyme catalyses a ribonucleoside 5'-diphosphate + ATP = a ribonucleoside 5'-triphosphate + ADP. Functionally, major role in the synthesis of nucleoside triphosphates other than ATP. The ATP gamma phosphate is transferred to the NDP beta phosphate via a ping-pong mechanism, using a phosphorylated active-site intermediate. In Nicotiana tabacum (Common tobacco), this protein is Nucleoside diphosphate kinase 2, chloroplastic.